The sequence spans 304 residues: Dihydroorotate dehydrogenase B (NAD(+)), catalytic subunit (304 aa).

FMN contacts are provided by residues Ser21 and 45-46 (KA). Residues Lys45 and 69 to 73 (NAIGL) each bind substrate. Residues Asn99 and Asn127 each coordinate FMN. A substrate-binding site is contributed by Asn127. The active-site Nucleophile is Cys130. Residues Lys165 and Ile191 each coordinate FMN. 192 to 193 (NT) lines the substrate pocket. FMN is bound by residues Gly217, 243–244 (GG), and 265–266 (GT).

It belongs to the dihydroorotate dehydrogenase family. Type 1 subfamily. As to quaternary structure, heterotetramer of 2 PyrK and 2 PyrD type B subunits. The cofactor is FMN.

It localises to the cytoplasm. It carries out the reaction (S)-dihydroorotate + NAD(+) = orotate + NADH + H(+). The protein operates within pyrimidine metabolism; UMP biosynthesis via de novo pathway; orotate from (S)-dihydroorotate (NAD(+) route): step 1/1. Its function is as follows. Catalyzes the conversion of dihydroorotate to orotate with NAD(+) as electron acceptor. This is Dihydroorotate dehydrogenase B (NAD(+)), catalytic subunit (pyrD) from Listeria monocytogenes serovar 1/2a (strain ATCC BAA-679 / EGD-e).